Reading from the N-terminus, the 347-residue chain is Protein RecA (347 aa).

Position 70–77 (70–77) interacts with ATP; the sequence is GPESSGKT.

It belongs to the RecA family.

The protein resides in the cytoplasm. Can catalyze the hydrolysis of ATP in the presence of single-stranded DNA, the ATP-dependent uptake of single-stranded DNA by duplex DNA, and the ATP-dependent hybridization of homologous single-stranded DNAs. It interacts with LexA causing its activation and leading to its autocatalytic cleavage. In Ruegeria pomeroyi (strain ATCC 700808 / DSM 15171 / DSS-3) (Silicibacter pomeroyi), this protein is Protein RecA.